The sequence spans 439 residues: Cysteine--tRNA ligase (439 aa).

Cys-26 contributes to the Zn(2+) binding site. Positions 28-38 (PTVYNHVHIGN) match the 'HIGH' region motif. Residues Cys-206, His-231, and Glu-235 each coordinate Zn(2+). The 'KMSKS' region signature appears at 263–267 (KMSKS). Lys-266 contacts ATP.

The protein belongs to the class-I aminoacyl-tRNA synthetase family. As to quaternary structure, monomer. The cofactor is Zn(2+).

It is found in the cytoplasm. It catalyses the reaction tRNA(Cys) + L-cysteine + ATP = L-cysteinyl-tRNA(Cys) + AMP + diphosphate. In Malacoplasma penetrans (strain HF-2) (Mycoplasma penetrans), this protein is Cysteine--tRNA ligase.